We begin with the raw amino-acid sequence, 617 residues long: uncharacterized protein (617 aa).

Composition is skewed to low complexity over residues 1-16 and 36-45; these read MSKC…SNSS and STTSSNGSNS. A disordered region spans residues 1–49; that stretch reads MSKCATPTPSTSSNSSDEAKRSPQPMSRGFPQRNMSTTSSNGSNSPRHR. The next 3 helical transmembrane spans lie at 219–239, 262–282, and 427–447; these read LMIG…GGLA, TAGA…FTGY, and PITL…LLTM.

It belongs to the TMCO4 family.

It is found in the membrane. This is an uncharacterized protein from Caenorhabditis elegans.